The sequence spans 175 residues: Viral interleukin-10 homolog (175 aa).

A signal peptide spans 1–19 (MLSVMVSSSLVLIVFFLGA). Cystine bridges form between Cys-37–Cys-127 and Cys-81–Cys-132. Asn-151 carries N-linked (GlcNAc...) asparagine; by host glycosylation.

The protein belongs to the IL-10 family. In terms of assembly, homodimer; disulfide-linked.

The protein localises to the secreted. In terms of biological role, functional viral IL-10 homolog. Can bind to the human IL-10 receptor and compete with human IL-10 for binding sites. Requires both subunits of the human IL-10 receptor complex to induce signal transduction events and biological activities. IL-10 signaling pathway has several immunosuppressive activities that are exploited by the virus. Inhibits TLR-induced type I interferon production in host plasmacytoid dendritic cells. The polypeptide is Viral interleukin-10 homolog (UL111A) (Human cytomegalovirus (strain AD169) (HHV-5)).